The following is a 472-amino-acid chain: CAAX prenyl protease 1 homolog (472 aa).

Residues 1 to 8 (MDVGGALD) are Lumenal-facing. The helical transmembrane segment at 9-29 (LYGCSVNVYNAILIFIWVLFL) threads the bilayer. At 30 to 75 (WETYINLRQLKVAKRVTESPEEIKCLMNDVDFDKSRRYAIDKMNFD) the chain is on the cytoplasmic side. The helical transmembrane segment at 76-96 (IVSGFYNILSLSAVLYFQLIA) threads the bilayer. Over 97 to 124 (WAWHKSQEHMLFVCSYAPRSFGTTEGSE) the chain is Lumenal. Residues 125-145 (ILFSLLFTVYVALFQFFESLP) traverse the membrane as a helical segment. The Cytoplasmic portion of the chain corresponds to 146–175 (WSYYRHFVIEERYGFNKQTIGFFIKDRLKS). The helical transmembrane segment at 176-196 (LAVGLVIGLPIISMLVWIIKA) threads the bilayer. Over 197 to 207 (GGHYFYIYAYG) the chain is Lumenal. Residues 208–228 (FTFVVSFIIMFIYPEFIAPIF) traverse the membrane as a helical segment. Over 229-340 (DRYEHFPDCE…LGHWKLKHMT (112 aa)) the chain is Cytoplasmic. A Zn(2+)-binding site is contributed by histidine 329. The active site involves glutamate 330. Residue histidine 333 coordinates Zn(2+). The helical transmembrane segment at 341–361 (FNLIIAQINIFFMFFAFGQLI) threads the bilayer. The Lumenal portion of the chain corresponds to 362-382 (NVDQLFVDFGFPPSTAPILIR). Residues 383–403 (LIVVFQFIFMPYSSVLEFLMT) traverse the membrane as a helical segment. The Cytoplasmic portion of the chain corresponds to 404–472 (MLSRKFEFQA…AIDAKMGKEK (69 aa)). Zn(2+) is bound at residue glutamate 410. Catalysis depends on aspartate 414, which acts as the Proton donor.

Belongs to the peptidase M48A family. Homodimer; disulfide-linked. It depends on Zn(2+) as a cofactor.

It localises to the endoplasmic reticulum membrane. It carries out the reaction Hydrolyzes the peptide bond -P2-(S-farnesyl or geranylgeranyl)C-P1'-P2'-P3'-COOH where P1' and P2' are amino acids with aliphatic side chains and P3' is any C-terminal residue.. Inhibited by ethylenediaminetetraacetic acid (EDTA) but not by serine, aspartic or cysteine protease inhibitors. Inhibited by high concentration of Zn(2+) (&gt; 0.1 mM). Its function is as follows. Zinc-dependent metalloproteinase. Proteolytically removes the C-terminal three residues of farnesylated proteins. This chain is CAAX prenyl protease 1 homolog, found in Taenia solium (Pork tapeworm).